The primary structure comprises 306 residues: Probable protein ABIL1 (306 aa).

The interval 200 to 236 (KNSKTNGARQSEFVLEETKATKPASRGKEPSTSPLPK) is disordered.

The protein belongs to the ABI family. Binds SCAR.

It is found in the cytoplasm. The protein resides in the cytoskeleton. Functionally, involved in regulation of actin and microtubule organization. Part of a WAVE complex that activates the Arp2/3 complex. In Oryza sativa subsp. japonica (Rice), this protein is Probable protein ABIL1.